The following is a 279-amino-acid chain: Phosphonates import ATP-binding protein PhnC (279 aa).

The ABC transporter domain occupies 2–245 (FQLKNVTRQF…AVAAIYGAET (244 aa)). 34-41 (GRSGAGKS) provides a ligand contact to ATP.

The protein belongs to the ABC transporter superfamily. Phosphonates importer (TC 3.A.1.9.1) family. The complex is composed of two ATP-binding proteins (PhnC), two transmembrane proteins (PhnE) and a solute-binding protein (PhnD).

It localises to the cell inner membrane. It carries out the reaction phosphonate(out) + ATP + H2O = phosphonate(in) + ADP + phosphate + H(+). Part of the ABC transporter complex PhnCDE involved in phosphonates import. Responsible for energy coupling to the transport system. The chain is Phosphonates import ATP-binding protein PhnC from Rhizobium meliloti (strain 1021) (Ensifer meliloti).